A 787-amino-acid chain; its full sequence is Phenylalanine--tRNA ligase beta subunit (787 aa).

In terms of domain architecture, tRNA-binding spans 39–149 (APAFAGVVIA…EDAPVGTNIR (111 aa)). The B5 domain maps to 400–475 (PEAKQVGLRL…RVYGYENIPD (76 aa)). Mg(2+)-binding residues include D453, D459, E462, and E463. In terms of domain architecture, FDX-ACB spans 694–786 (SKFQPVRRDL…AATAAGARLR (93 aa)).

It belongs to the phenylalanyl-tRNA synthetase beta subunit family. Type 1 subfamily. Tetramer of two alpha and two beta subunits. The cofactor is Mg(2+).

The protein resides in the cytoplasm. It carries out the reaction tRNA(Phe) + L-phenylalanine + ATP = L-phenylalanyl-tRNA(Phe) + AMP + diphosphate + H(+). The chain is Phenylalanine--tRNA ligase beta subunit (pheT) from Neisseria meningitidis serogroup B (strain ATCC BAA-335 / MC58).